A 464-amino-acid chain; its full sequence is Elongation factor 1-alpha (464 aa).

A tr-type G domain is found at 5–242 (KTHINIVVIG…DSVVPPQRPT (238 aa)). GTP is bound by residues 14–21 (GHVDSGKS), 91–95 (DAPGH), and 153–156 (NKMD). 2 positions are modified to 5-glutamyl glycerylphosphorylethanolamine: glutamate 301 and glutamate 374.

The protein belongs to the TRAFAC class translation factor GTPase superfamily. Classic translation factor GTPase family. EF-Tu/EF-1A subfamily.

It localises to the cytoplasm. In terms of biological role, this protein promotes the GTP-dependent binding of aminoacyl-tRNA to the A-site of ribosomes during protein biosynthesis. In Onchocerca volvulus, this protein is Elongation factor 1-alpha.